Reading from the N-terminus, the 176-residue chain is Isopentenyl-diphosphate Delta-isomerase (176 aa).

The Mn(2+) site is built by His22 and His28. The 135-residue stretch at 26–160 (LRHKAVSVFV…PDRYTPWLRI (135 aa)) folds into the Nudix hydrolase domain. Cys62 is an active-site residue. His64 contacts Mn(2+). Position 82 (Glu82) interacts with Mg(2+). Positions 108 and 110 each coordinate Mn(2+). Glu110 is a catalytic residue.

It belongs to the IPP isomerase type 1 family. Mg(2+) serves as cofactor. Mn(2+) is required as a cofactor.

The protein localises to the cytoplasm. It carries out the reaction isopentenyl diphosphate = dimethylallyl diphosphate. The protein operates within isoprenoid biosynthesis; dimethylallyl diphosphate biosynthesis; dimethylallyl diphosphate from isopentenyl diphosphate: step 1/1. It participates in porphyrin-containing compound metabolism; chlorophyll biosynthesis. Catalyzes the 1,3-allylic rearrangement of the homoallylic substrate isopentenyl (IPP) to its highly electrophilic allylic isomer, dimethylallyl diphosphate (DMAPP). This Roseobacter denitrificans (strain ATCC 33942 / OCh 114) (Erythrobacter sp. (strain OCh 114)) protein is Isopentenyl-diphosphate Delta-isomerase.